We begin with the raw amino-acid sequence, 173 residues long: Alpha-crystallin A chain (173 aa).

At methionine 1 the chain carries N-acetylmethionine. The region spanning 52–164 (LFRSVLESGI…SDRPIPVARE (113 aa)) is the sHSP domain. Residues histidine 100, glutamate 102, histidine 107, and histidine 154 each contribute to the Zn(2+) site. The interval 152 to 173 (TIHSDRPIPVAREEKPTSAPSS) is disordered. The span at 153 to 167 (IHSDRPIPVAREEKP) shows a compositional bias: basic and acidic residues.

This sequence belongs to the small heat shock protein (HSP20) family. In terms of assembly, heteropolymer composed of three CRYAA and one CRYAB subunits. Inter-subunit bridging via zinc ions enhances stability, which is crucial as there is no protein turn over in the lens. Can also form homodimers and homotetramers (dimers of dimers) which serve as the building blocks of homooligomers. Within homooligomers, the zinc-binding motif is created from residues of 3 different molecules. His-100 and Glu-102 from one molecule are ligands of the zinc ion, and His-107 and His-154 residues from additional molecules complete the site with tetrahedral coordination geometry.

It localises to the cytoplasm. The protein localises to the nucleus. Contributes to the transparency and refractive index of the lens. May act as a chaperone, preventing aggregation of various proteins under a wide range of stress conditions. This chain is Alpha-crystallin A chain (CRYAA), found in Alligator mississippiensis (American alligator).